Reading from the N-terminus, the 837-residue chain is A disintegrin and metalloproteinase with thrombospondin motifs 4 (837 aa).

A signal peptide spans 1–51 (MSQTGSHPGRGLAGRWLWGAQPCLLLPIVPLSWLVWLLLLLLASLLPSARL). Residues 52 to 212 (ASPLPREEEI…PSPRPRRAKR (161 aa)) constitute a propeptide that is removed on maturation. The N-linked (GlcNAc...) asparagine glycan is linked to asparagine 68. The tract at residues 166 to 191 (EGGTPNSAGGPGAHILRRKSPASGQG) is disordered. A Cysteine switch motif is present at residues 192 to 199 (PMCNVKAP). Cysteine 194 lines the Zn(2+) pocket. Residues 218 to 428 (RFVETLVVAD…GYGHCLLDKP (211 aa)) enclose the Peptidase M12B domain. Disulfide bonds link cysteine 293–cysteine 345, cysteine 322–cysteine 327, cysteine 339–cysteine 423, cysteine 377–cysteine 407, cysteine 449–cysteine 472, cysteine 460–cysteine 482, cysteine 467–cysteine 501, cysteine 495–cysteine 506, cysteine 532–cysteine 569, cysteine 536–cysteine 574, and cysteine 547–cysteine 559. Residue histidine 361 coordinates Zn(2+). Glutamate 362 is a catalytic residue. Residues histidine 365 and histidine 371 each coordinate Zn(2+). Positions 437-519 (TFPGKDYDAD…DQLQDFNIPQ (83 aa)) constitute a Disintegrin domain. Positions 520–575 (AGGWGPWGPWGDCSRTCGGGVQFSSRDCTRPVPRNGGKYCEGRRTRFRSCNTEDCP) constitute a TSP type-1 domain. The interval 686 to 837 (SKQSGSFRKF…LRRRPWVGRK (152 aa)) is spacer.

Interacts with SRPX2. Zn(2+) serves as cofactor. The precursor is cleaved by a furin endopeptidase. Post-translationally, glycosylated. Can be O-fucosylated by POFUT2 on a serine or a threonine residue found within the consensus sequence C1-X(2)-(S/T)-C2-G of the TSP type-1 repeat domains where C1 and C2 are the first and second cysteine residue of the repeat, respectively. Fucosylated repeats can then be further glycosylated by the addition of a beta-1,3-glucose residue by the glucosyltransferase, B3GALTL. Fucosylation mediates the efficient secretion of ADAMTS family members. Can also be C-glycosylated with one or two mannose molecules on tryptophan residues within the consensus sequence W-X-X-W of the TPRs, and N-glycosylated. These other glycosylations can also facilitate secretion.

It localises to the secreted. Its subcellular location is the extracellular space. The protein resides in the extracellular matrix. The catalysed reaction is Glutamyl endopeptidase. Bonds cleaved include 370-Thr-Glu-Gly-Glu-|-Ala-Arg-Gly-Ser-377 in the interglobular domain of mammalian aggrecan.. Its function is as follows. Cleaves aggrecan, a cartilage proteoglycan, at the '392-Glu-|-Ala-393' site and may be involved in its turnover. Also cleaves COMP. May play an important role in the destruction of aggrecan in arthritic diseases. In Pongo abelii (Sumatran orangutan), this protein is A disintegrin and metalloproteinase with thrombospondin motifs 4 (ADAMTS4).